Reading from the N-terminus, the 374-residue chain is Glutamate 5-kinase (374 aa).

K16 is a binding site for ATP. Substrate is bound by residues S56, D143, and N155. Residue 175 to 176 (TD) participates in ATP binding. In terms of domain architecture, PUA spans 282 to 360 (RGRVVLDAGA…SEIEAVLGYV (79 aa)).

This sequence belongs to the glutamate 5-kinase family.

Its subcellular location is the cytoplasm. The enzyme catalyses L-glutamate + ATP = L-glutamyl 5-phosphate + ADP. It functions in the pathway amino-acid biosynthesis; L-proline biosynthesis; L-glutamate 5-semialdehyde from L-glutamate: step 1/2. Catalyzes the transfer of a phosphate group to glutamate to form L-glutamate 5-phosphate. The chain is Glutamate 5-kinase from Ralstonia nicotianae (strain ATCC BAA-1114 / GMI1000) (Ralstonia solanacearum).